The primary structure comprises 125 residues: MRALGRHVLAEVYGCSFEILNDIKKVEEIMVKAALEAGAEIREVCFHKFSPQGVSGVVVISESHLAIHTWPELGYAAVDVFTCGERVNPWDACRYLTEKFKAADVHATEIERGVIEPPQAAAVNL.

The active-site Schiff-base intermediate with substrate; via pyruvic acid is S63. S63 is modified (pyruvic acid (Ser); by autocatalysis). The active-site Proton acceptor; for processing activity is H68. Residue C83 is the Proton donor; for catalytic activity of the active site.

It belongs to the prokaryotic AdoMetDC family. Type 1 subfamily. As to quaternary structure, heterotetramer of two alpha and two beta chains arranged as a dimer of alpha/beta heterodimers. It depends on pyruvate as a cofactor. In terms of processing, is synthesized initially as an inactive proenzyme. Formation of the active enzyme involves a self-maturation process in which the active site pyruvoyl group is generated from an internal serine residue via an autocatalytic post-translational modification. Two non-identical subunits are generated from the proenzyme in this reaction, and the pyruvate is formed at the N-terminus of the alpha chain, which is derived from the carboxyl end of the proenzyme. The post-translation cleavage follows an unusual pathway, termed non-hydrolytic serinolysis, in which the side chain hydroxyl group of the serine supplies its oxygen atom to form the C-terminus of the beta chain, while the remainder of the serine residue undergoes an oxidative deamination to produce ammonia and the pyruvoyl group blocking the N-terminus of the alpha chain.

The enzyme catalyses S-adenosyl-L-methionine + H(+) = S-adenosyl 3-(methylsulfanyl)propylamine + CO2. The protein operates within amine and polyamine biosynthesis; S-adenosylmethioninamine biosynthesis; S-adenosylmethioninamine from S-adenosyl-L-methionine: step 1/1. Functionally, catalyzes the decarboxylation of S-adenosylmethionine to S-adenosylmethioninamine (dcAdoMet), the propylamine donor required for the synthesis of the polyamines spermine and spermidine from the diamine putrescine. The protein is S-adenosylmethionine decarboxylase proenzyme of Moorella thermoacetica (strain ATCC 39073 / JCM 9320).